Reading from the N-terminus, the 198-residue chain is Elongation factor Ts (198 aa).

An involved in Mg(2+) ion dislocation from EF-Tu region spans residues 81–84 (TDFV).

This sequence belongs to the EF-Ts family.

The protein localises to the cytoplasm. In terms of biological role, associates with the EF-Tu.GDP complex and induces the exchange of GDP to GTP. It remains bound to the aminoacyl-tRNA.EF-Tu.GTP complex up to the GTP hydrolysis stage on the ribosome. The chain is Elongation factor Ts from Dictyoglomus thermophilum (strain ATCC 35947 / DSM 3960 / H-6-12).